The sequence spans 421 residues: D-amino acid dehydrogenase (421 aa).

An FAD-binding site is contributed by 3-17 (VLILGSGVIGVTSAY).

This sequence belongs to the DadA oxidoreductase family. FAD is required as a cofactor.

The catalysed reaction is a D-alpha-amino acid + A + H2O = a 2-oxocarboxylate + AH2 + NH4(+). Its function is as follows. Oxidative deamination of D-amino acids. The polypeptide is D-amino acid dehydrogenase (Bradyrhizobium diazoefficiens (strain JCM 10833 / BCRC 13528 / IAM 13628 / NBRC 14792 / USDA 110)).